The chain runs to 283 residues: NADPH-dependent 7-cyano-7-deazaguanine reductase (283 aa).

90 to 92 (IES) serves as a coordination point for substrate. NADPH is bound at residue 92–93 (SK). Cysteine 190 functions as the Thioimide intermediate in the catalytic mechanism. Aspartate 197 (proton donor) is an active-site residue. A substrate-binding site is contributed by 229–230 (HE). Position 258-259 (258-259 (RG)) interacts with NADPH.

This sequence belongs to the GTP cyclohydrolase I family. QueF type 2 subfamily. Homodimer.

It localises to the cytoplasm. It catalyses the reaction 7-aminomethyl-7-carbaguanine + 2 NADP(+) = 7-cyano-7-deazaguanine + 2 NADPH + 3 H(+). It functions in the pathway tRNA modification; tRNA-queuosine biosynthesis. Functionally, catalyzes the NADPH-dependent reduction of 7-cyano-7-deazaguanine (preQ0) to 7-aminomethyl-7-deazaguanine (preQ1). This is NADPH-dependent 7-cyano-7-deazaguanine reductase from Dechloromonas aromatica (strain RCB).